The primary structure comprises 277 residues: Heme oxygenase (277 aa).

A heme b-binding site is contributed by histidine 29.

The protein belongs to the heme oxygenase family.

Its subcellular location is the microsome. It is found in the endoplasmic reticulum. It catalyses the reaction heme b + 3 reduced [NADPH--hemoprotein reductase] + 3 O2 = biliverdin IXalpha + CO + Fe(2+) + 3 oxidized [NADPH--hemoprotein reductase] + 3 H2O + H(+). In terms of biological role, heme oxygenase cleaves the heme ring at the alpha methene bridge to form biliverdin. Biliverdin is subsequently converted to bilirubin by biliverdin reductase. Under physiological conditions, the activity of heme oxygenase is highest in the spleen, where senescent erythrocytes are sequestrated and destroyed. The protein is Heme oxygenase (hmox) of Takifugu rubripes (Japanese pufferfish).